A 164-amino-acid chain; its full sequence is FMN reductase (NADH) RutF (164 aa).

Belongs to the non-flavoprotein flavin reductase family. RutF subfamily.

The catalysed reaction is FMNH2 + NAD(+) = FMN + NADH + 2 H(+). In terms of biological role, catalyzes the reduction of FMN to FMNH2 which is used to reduce pyrimidine by RutA via the Rut pathway. The sequence is that of FMN reductase (NADH) RutF from Escherichia coli O127:H6 (strain E2348/69 / EPEC).